The following is a 444-amino-acid chain: UDP-N-acetylmuramate--L-alanine ligase (444 aa).

An ATP-binding site is contributed by 110–116 (GAHGKTS).

This sequence belongs to the MurCDEF family. Phosphorylated by StkP in vitro. Dephosphorylated by PhpP in vitro.

The protein localises to the cytoplasm. It catalyses the reaction UDP-N-acetyl-alpha-D-muramate + L-alanine + ATP = UDP-N-acetyl-alpha-D-muramoyl-L-alanine + ADP + phosphate + H(+). The protein operates within cell wall biogenesis; peptidoglycan biosynthesis. Its function is as follows. Cell wall formation. The sequence is that of UDP-N-acetylmuramate--L-alanine ligase from Streptococcus pneumoniae serotype 4 (strain ATCC BAA-334 / TIGR4).